Here is a 221-residue protein sequence, read N- to C-terminus: Oxaloacetate tautomerase FAHD1, mitochondrial (221 aa).

A mitochondrion-targeting transit peptide spans 1 to 24; that stretch reads MAASRPLSRFWEWGKNIVCVGRNY. R22 serves as a coordination point for oxalate. S37 bears the Phosphoserine mark. Mg(2+)-binding residues include E68, E70, and D99. K110 carries the N6-acetyllysine modification. N6-succinyllysine is present on K112. The oxalate site is built by K120 and T189.

This sequence belongs to the FAH family. Homodimer. It depends on Mg(2+) as a cofactor. Requires Mn(2+) as cofactor. In terms of tissue distribution, ubiquitous (at protein level).

The protein resides in the mitochondrion. Its subcellular location is the cytoplasm. It is found in the cytosol. It carries out the reaction oxaloacetate = enol-oxaloacetate. The catalysed reaction is oxaloacetate + H(+) = pyruvate + CO2. The enzyme catalyses a 3-acylpyruvate + H2O = a carboxylate + pyruvate + H(+). It catalyses the reaction acetylpyruvate + H2O = acetate + pyruvate + H(+). It carries out the reaction 3-fumarylpyruvate + H2O = fumarate + pyruvate + H(+). Oxaloacetate decarboxylation is competitively inhibited by oxalate. Its function is as follows. Tautomerase that converts enol-oxaloacetate, a strong inhibitor of succinate dehydrogenase, to the physiological keto form of oxaloacetate. It is thereby required to maximize aerobic respiration efficiency by preventing succinate dehydrogenase inhibition. Also acts as a weak oxaloacetate decarboxylase (ODx), catalyzing the decarboxylation of oxaloacetate (OAA) to pyruvate and CO(2), and as such is likely a regulatory enzyme in the TCA cycle. Also displays acylpyruvase activity, being able to hydrolyze acetylpyruvate and fumarylpyruvate in vitro. Exhibits only a weak hydrolase activity on methylacetopyruvate and acetylacetone, and no activity toward acetoacetyl-CoA. This chain is Oxaloacetate tautomerase FAHD1, mitochondrial, found in Homo sapiens (Human).